The chain runs to 908 residues: Flap endonuclease GEN homolog 1 (908 aa).

Positions 2-96 (GVNDLWQILE…SKRTQTRYGP (95 aa)) are XPG-N domain. Residues D30, E75, E134, E136, D155, D157, and D208 each contribute to the Mg(2+) site. An XPG-I domain region spans residues 122–208 (ECLGMPWVQA…VGLAVLLGCD (87 aa)). Residues 208–383 (DYLPKGVPGV…LLVLLTRYDM (176 aa)) form a 5'-3' exonuclease domain region. Residues 389–463 (GRKTSNQLQP…VYQKQLSETK (75 aa)) form a chromodomain region. Disordered regions lie at residues 460–482 (SETKGRKQKSMKNKPKGSHLPEA), 629–650 (YESEQGTSDSEGSGRDLQQSNP), 792–834 (RDSS…NKLR), and 853–886 (AEDEENGFSDLGRSPQSFRPCHDKDENSTASWEN). The span at 465-476 (RKQKSMKNKPKG) shows a compositional bias: basic residues. Phosphoserine occurs at positions 794 and 795. The segment covering 824 to 834 (HVRDSTHNKLR) has biased composition (basic and acidic residues).

The protein belongs to the XPG/RAD2 endonuclease family. GEN subfamily. In terms of assembly, largely monomeric, dimerizes on the Holliday junction and the first nick occurs upon dimerization at the junction. Mg(2+) is required as a cofactor. Expressed in bone marrow and testis and to a lesser extent in thymus, spleen, brain and colon.

Its subcellular location is the nucleus. Endonuclease which resolves Holliday junctions (HJs) by the introduction of symmetrically related cuts across the junction point, to produce nicked duplex products in which the nicks can be readily ligated. Four-way DNA intermediates, also known as Holliday junctions, are formed during homologous recombination and DNA repair, and their resolution is necessary for proper chromosome segregation. Cleaves HJs by a nick and counter-nick mechanism involving dual coordinated incisions that lead to the formation of ligatable nicked duplex products. Cleavage of the first strand is rate limiting, while second strand cleavage is rapid. Largely monomeric, dimerizes on the HJ and the first nick occurs upon dimerization at the junction. Efficiently cleaves both single and double HJs contained within large recombination intermediates. Exhibits a weak sequence preference for incision between two G residues that reside in a T-rich region of DNA. Also has endonuclease activity on 5'-flap and replication fork (RF) DNA substrates. The protein is Flap endonuclease GEN homolog 1 (Gen1) of Mus musculus (Mouse).